Here is a 192-residue protein sequence, read N- to C-terminus: Inosine triphosphate pyrophosphatase (192 aa).

8 to 13 lines the ITP pocket; the sequence is TTNLKK. Glutamate 34 is a Mg(2+) binding site. Residues lysine 46, 64–65, lysine 81, 141–144, lysine 164, and 169–170 each bind ITP; these read DT, EGFD, and HR.

Belongs to the HAM1 NTPase family. In terms of assembly, homodimer. Requires Mg(2+) as cofactor. Mn(2+) is required as a cofactor.

The protein resides in the cytoplasm. It is found in the nucleus. The enzyme catalyses ITP + H2O = IMP + diphosphate + H(+). The catalysed reaction is dITP + H2O = dIMP + diphosphate + H(+). It catalyses the reaction XTP + H2O = XMP + diphosphate + H(+). In terms of biological role, pyrophosphatase that hydrolyzes non-canonical purine nucleotides such as inosine triphosphate (ITP), deoxyinosine triphosphate (dITP) or xanthosine 5'-triphosphate (XTP) to their respective monophosphate derivatives. The enzyme does not distinguish between the deoxy- and ribose forms. Probably excludes non-canonical purines from RNA and DNA precursor pools, thus preventing their incorporation into RNA and DNA and avoiding chromosomal lesions. This Encephalitozoon cuniculi (strain GB-M1) (Microsporidian parasite) protein is Inosine triphosphate pyrophosphatase.